The following is a 413-amino-acid chain: MITGIKGFNDILPGEVERWQHIEATARRVFSLYGFSEIRIPILEKTELFRRSIGDTTDIVEKEMYSFVDKGENAVTMRPEGTASVMRSYIEHKLYAQDPVAKLYYMGPMFRYERPQKGRYRQFHQIGAEVTGVTDPKVDAQVLTMLCHYFAELGLTEPTLQINSLGCPECRPAYRQALIDFLRERLDSLCEDCKRRYQTNPLRALDCKSAHCKEATASAPAMLDSLCAGCDDHFTATRRHLERAGTTYSINNRMVRGLDYYTRTTFELVTGLLGAQSAVAAGGRYDGLISDLGGPAIPGIGFAMGVERIALLLGDQHFVGRPDLFIAALGEEAQDEAFRLMCGLQRNGVAVEMDYEGKSLKSQMRRSDKFNARFTLIIGGDELAIGAAVLKAMDTGVQVEVPLTPEEVAARIT.

It belongs to the class-II aminoacyl-tRNA synthetase family. In terms of assembly, homodimer.

It localises to the cytoplasm. The enzyme catalyses tRNA(His) + L-histidine + ATP = L-histidyl-tRNA(His) + AMP + diphosphate + H(+). The sequence is that of Histidine--tRNA ligase from Geobacter sulfurreducens (strain ATCC 51573 / DSM 12127 / PCA).